Consider the following 528-residue polypeptide: Tyrosine 3-monooxygenase (528 aa).

Ser-19 carries the phosphoserine; by CaMK2 modification. The disordered stretch occupies residues 33–65; the sequence is GQGAPGPSLTGSPWPGTAAPAASYTPTPRSPRF. A compositionally biased stretch (low complexity) spans 47–59; the sequence is PGTAAPAASYTPT. The residue at position 62 (Ser-62) is a Phosphoserine. Ser-71 is subject to Phosphoserine; by CaMK2 and PKA. Fe cation is bound by residues His-361, His-366, and Glu-406. At Ser-502 the chain carries Phosphoserine.

It belongs to the biopterin-dependent aromatic amino acid hydroxylase family. As to quaternary structure, homotetramer. Interacts (when phosphorylated at Ser-19) with YWHAG; one YWHAG dimer binds to one TH tetramer and this interaction may influence the phosphorylation and dephosphorylation of other sites. Interacts with NT5DC2; the interaction results in reduced phosphorylation and decreased catalytic activity of TH. Fe(2+) is required as a cofactor. Post-translationally, phosphorylated on Ser-19, Ser-62 and Ser-71 by several protein kinases with different site specificities. Phosphorylation at Ser-62 and Ser-71 leads to an increase of TH activity. Phosphorylation at Ser-71 activates the enzyme and also counteracts the feedback inhibition of TH by catecholamines. Phosphorylation of Ser-19 and Ser-62 triggers the proteasomal degradation of TH through the ubiquitin-proteasome pathway. Phosphorylation at Ser-62 facilitates transport of TH from the soma to the nerve terminals via the microtubule network. Phosphorylation at Ser-19 induces the high-affinity binding to the 14-3-3 protein YWHAG; this interaction may influence the phosphorylation and dephosphorylation of other sites. Ser-19 increases the phosphorylation at Ser-71 in a hierarchical manner, leading to increased activity. Mainly expressed in the brain and adrenal glands.

It is found in the cytoplasm. The protein resides in the perinuclear region. The protein localises to the nucleus. It localises to the cell projection. Its subcellular location is the axon. It is found in the cytoplasmic vesicle. The protein resides in the secretory vesicle. The protein localises to the synaptic vesicle. The enzyme catalyses (6R)-L-erythro-5,6,7,8-tetrahydrobiopterin + L-tyrosine + O2 = (4aS,6R)-4a-hydroxy-L-erythro-5,6,7,8-tetrahydrobiopterin + L-dopa. The protein operates within catecholamine biosynthesis; dopamine biosynthesis; dopamine from L-tyrosine: step 1/2. Inhibited in feedback fashion by the catecholamine neurotransmitters, especially by dopamine in competition with tetrahydrobiopterin. Phosphorylation of several Ser/Thr residues in the N-terminus regulates the catalytic activity. Ser-62 and Ser-71 are readily phosphorylated to activate the catalytic activity. A Cysteine modification induced by N-ethylmaleimide (NEM), inhibits tyrosine 3-monooxygenase activity through the modification of the Cys-207. In terms of biological role, catalyzes the conversion of L-tyrosine to L-dihydroxyphenylalanine (L-Dopa), the rate-limiting step in the biosynthesis of catecholamines, dopamine, noradrenaline, and adrenaline. Uses tetrahydrobiopterin and molecular oxygen to convert tyrosine to L-Dopa. In addition to tyrosine, is able to catalyze the hydroxylation of phenylalanine and tryptophan with lower specificity. Positively regulates the regression of retinal hyaloid vessels during postnatal development. Lacks catalytic activity. This Homo sapiens (Human) protein is Tyrosine 3-monooxygenase.